The primary structure comprises 158 residues: Protein-export protein SecB (158 aa).

The protein belongs to the SecB family. In terms of assembly, homotetramer, a dimer of dimers. One homotetramer interacts with 1 SecA dimer.

The protein localises to the cytoplasm. In terms of biological role, one of the proteins required for the normal export of preproteins out of the cell cytoplasm. It is a molecular chaperone that binds to a subset of precursor proteins, maintaining them in a translocation-competent state. It also specifically binds to its receptor SecA. This Rhodopseudomonas palustris (strain BisB5) protein is Protein-export protein SecB.